The sequence spans 507 residues: ATP synthase subunit alpha (507 aa).

Position 171–178 (171–178) interacts with ATP; sequence GDRQTGKT.

Belongs to the ATPase alpha/beta chains family. As to quaternary structure, F-type ATPases have 2 components, CF(1) - the catalytic core - and CF(0) - the membrane proton channel. CF(1) has five subunits: alpha(3), beta(3), gamma(1), delta(1), epsilon(1). CF(0) has three main subunits: a(1), b(2) and c(9-12). The alpha and beta chains form an alternating ring which encloses part of the gamma chain. CF(1) is attached to CF(0) by a central stalk formed by the gamma and epsilon chains, while a peripheral stalk is formed by the delta and b chains.

It localises to the cell inner membrane. It carries out the reaction ATP + H2O + 4 H(+)(in) = ADP + phosphate + 5 H(+)(out). Produces ATP from ADP in the presence of a proton gradient across the membrane. The alpha chain is a regulatory subunit. The chain is ATP synthase subunit alpha from Bdellovibrio bacteriovorus (strain ATCC 15356 / DSM 50701 / NCIMB 9529 / HD100).